Consider the following 207-residue polypeptide: Ribosomal RNA small subunit methyltransferase G (207 aa).

S-adenosyl-L-methionine-binding positions include Gly-73, Leu-78, 124-125, and Arg-139; that span reads VE.

This sequence belongs to the methyltransferase superfamily. RNA methyltransferase RsmG family.

The protein resides in the cytoplasm. It catalyses the reaction guanosine(527) in 16S rRNA + S-adenosyl-L-methionine = N(7)-methylguanosine(527) in 16S rRNA + S-adenosyl-L-homocysteine. Functionally, specifically methylates the N7 position of guanine in position 527 of 16S rRNA. In Escherichia coli (strain SMS-3-5 / SECEC), this protein is Ribosomal RNA small subunit methyltransferase G.